A 431-amino-acid polypeptide reads, in one-letter code: Glucose-1-phosphate adenylyltransferase (431 aa).

Residues Y109, G175, 190-191 (EK), and S208 each bind alpha-D-glucose 1-phosphate.

The protein belongs to the bacterial/plant glucose-1-phosphate adenylyltransferase family. Homotetramer.

It carries out the reaction alpha-D-glucose 1-phosphate + ATP + H(+) = ADP-alpha-D-glucose + diphosphate. The protein operates within glycan biosynthesis; glycogen biosynthesis. Functionally, involved in the biosynthesis of ADP-glucose, a building block required for the elongation reactions to produce glycogen. Catalyzes the reaction between ATP and alpha-D-glucose 1-phosphate (G1P) to produce pyrophosphate and ADP-Glc. In Alteromonas mediterranea (strain DSM 17117 / CIP 110805 / LMG 28347 / Deep ecotype), this protein is Glucose-1-phosphate adenylyltransferase.